The primary structure comprises 281 residues: Pantothenate synthetase (281 aa).

30–37 (MGNLHLGH) is an ATP binding site. Catalysis depends on H37, which acts as the Proton donor. Q61 contacts (R)-pantoate. Q61 serves as a coordination point for beta-alanine. ATP is bound at residue 149–152 (GRKD). Q155 contacts (R)-pantoate. ATP contacts are provided by residues I178 and 186-189 (MSSR).

Belongs to the pantothenate synthetase family. Homodimer.

The protein localises to the cytoplasm. It carries out the reaction (R)-pantoate + beta-alanine + ATP = (R)-pantothenate + AMP + diphosphate + H(+). Its pathway is cofactor biosynthesis; (R)-pantothenate biosynthesis; (R)-pantothenate from (R)-pantoate and beta-alanine: step 1/1. Catalyzes the condensation of pantoate with beta-alanine in an ATP-dependent reaction via a pantoyl-adenylate intermediate. This Shewanella sediminis (strain HAW-EB3) protein is Pantothenate synthetase.